The following is a 450-amino-acid chain: Phosphoglucosamine mutase (450 aa).

Residue Ser102 is the Phosphoserine intermediate of the active site. Residues Ser102, Asp243, Asp245, and Asp247 each coordinate Mg(2+). Residue Ser102 is modified to Phosphoserine.

It belongs to the phosphohexose mutase family. Mg(2+) serves as cofactor. In terms of processing, activated by phosphorylation.

It catalyses the reaction alpha-D-glucosamine 1-phosphate = D-glucosamine 6-phosphate. Its function is as follows. Catalyzes the conversion of glucosamine-6-phosphate to glucosamine-1-phosphate. The polypeptide is Phosphoglucosamine mutase (Rhizobium meliloti (strain 1021) (Ensifer meliloti)).